Consider the following 359-residue polypeptide: S-adenosylmethionine:tRNA ribosyltransferase-isomerase (359 aa).

This sequence belongs to the QueA family. In terms of assembly, monomer.

It is found in the cytoplasm. It carries out the reaction 7-aminomethyl-7-carbaguanosine(34) in tRNA + S-adenosyl-L-methionine = epoxyqueuosine(34) in tRNA + adenine + L-methionine + 2 H(+). The protein operates within tRNA modification; tRNA-queuosine biosynthesis. Functionally, transfers and isomerizes the ribose moiety from AdoMet to the 7-aminomethyl group of 7-deazaguanine (preQ1-tRNA) to give epoxyqueuosine (oQ-tRNA). The protein is S-adenosylmethionine:tRNA ribosyltransferase-isomerase of Ralstonia pickettii (strain 12J).